Consider the following 151-residue polypeptide: Ribosome-binding factor A (151 aa).

A disordered region spans residues 120 to 151 (RSPKVVRDLDDTSSDDTSPDANTDTDKETDAE).

This sequence belongs to the RbfA family. As to quaternary structure, monomer. Binds 30S ribosomal subunits, but not 50S ribosomal subunits or 70S ribosomes.

It is found in the cytoplasm. In terms of biological role, one of several proteins that assist in the late maturation steps of the functional core of the 30S ribosomal subunit. Associates with free 30S ribosomal subunits (but not with 30S subunits that are part of 70S ribosomes or polysomes). Required for efficient processing of 16S rRNA. May interact with the 5'-terminal helix region of 16S rRNA. The sequence is that of Ribosome-binding factor A from Xanthobacter autotrophicus (strain ATCC BAA-1158 / Py2).